The primary structure comprises 584 residues: Insulin-like growth factor 2 mRNA-binding protein 3 (584 aa).

2 RRM domains span residues 2–75 and 81–156; these read NKLY…HSVP and RKLQ…YIPD. The tract at residues 160–199 is disordered; sequence AQQPPQQHPQGRRGFGQRGPPRQGSPSATTRQKPQSDVPL. The segment covering 184–194 has biased composition (polar residues); it reads SPSATTRQKPQ. 4 KH domains span residues 196–261, 277–344, 409–474, and 491–557; these read DVPL…CKII, EIPL…EEEI, SETV…QGRI, and KLEA…QRKI.

This sequence belongs to the RRM IMP/VICKZ family. In terms of assembly, homodimer and multimer.

The protein resides in the cytoplasm. Its subcellular location is the nucleus. It localises to the P-body. It is found in the stress granule. In terms of biological role, RNA-binding factor that may recruit target transcripts to cytoplasmic protein-RNA complexes (mRNPs). This transcript 'caging' into mRNPs allows mRNA transport and transient storage. It also modulates the rate and location at which target transcripts encounter the translational apparatus and shields them from endonuclease attacks or microRNA-mediated degradation. Preferentially binds to N6-methyladenosine (m6A)-containing mRNAs and increases their stability. This is Insulin-like growth factor 2 mRNA-binding protein 3 (IGF2BP3) from Gallus gallus (Chicken).